The chain runs to 383 residues: Sterol 24-C-methyltransferase ERG6 (383 aa).

S2 bears the N-acetylserine mark. S99 is subject to Phosphoserine.

It belongs to the class I-like SAM-binding methyltransferase superfamily. Erg6/SMT family. Interacts with ERG28.

It localises to the microsome. It is found in the mitochondrion. It catalyses the reaction zymosterol + S-adenosyl-L-methionine = fecosterol + S-adenosyl-L-homocysteine + H(+). It participates in steroid metabolism; ergosterol biosynthesis; ergosterol from zymosterol: step 1/5. Its function is as follows. Sterol 24-C-methyltransferase; part of the third module of ergosterol biosynthesis pathway that includes the late steps of the pathway. ERG6 catalyzes the methyl transfer from S-adenosyl-methionine to the C-24 of zymosterol to form fecosterol. The third module or late pathway involves the ergosterol synthesis itself through consecutive reactions that mainly occur in the endoplasmic reticulum (ER) membrane. Firstly, the squalene synthase ERG9 catalyzes the condensation of 2 farnesyl pyrophosphate moieties to form squalene, which is the precursor of all steroids. Squalene synthase is crucial for balancing the incorporation of farnesyl diphosphate (FPP) into sterol and nonsterol isoprene synthesis. Secondly, the squalene epoxidase ERG1 catalyzes the stereospecific oxidation of squalene to (S)-2,3-epoxysqualene, which is considered to be a rate-limiting enzyme in steroid biosynthesis. Then, the lanosterol synthase ERG7 catalyzes the cyclization of (S)-2,3 oxidosqualene to lanosterol, a reaction that forms the sterol core. In the next steps, lanosterol is transformed to zymosterol through a complex process involving various demethylation, reduction and desaturation reactions. The lanosterol 14-alpha-demethylase ERG11 (also known as CYP51) catalyzes C14-demethylation of lanosterol to produce 4,4'-dimethyl cholesta-8,14,24-triene-3-beta-ol, which is critical for ergosterol biosynthesis. The C-14 reductase ERG24 reduces the C14=C15 double bond of 4,4-dimethyl-cholesta-8,14,24-trienol to produce 4,4-dimethyl-cholesta-8,24-dienol. 4,4-dimethyl-cholesta-8,24-dienol is substrate of the C-4 demethylation complex ERG25-ERG26-ERG27 in which ERG25 catalyzes the three-step monooxygenation required for the demethylation of 4,4-dimethyl and 4alpha-methylsterols, ERG26 catalyzes the oxidative decarboxylation that results in a reduction of the 3-beta-hydroxy group at the C-3 carbon to an oxo group, and ERG27 is responsible for the reduction of the keto group on the C-3. ERG28 has a role as a scaffold to help anchor ERG25, ERG26 and ERG27 to the endoplasmic reticulum and ERG29 regulates the activity of the iron-containing C4-methylsterol oxidase ERG25. Then, the sterol 24-C-methyltransferase ERG6 catalyzes the methyl transfer from S-adenosyl-methionine to the C-24 of zymosterol to form fecosterol. The C-8 sterol isomerase ERG2 catalyzes the reaction which results in unsaturation at C-7 in the B ring of sterols and thus converts fecosterol to episterol. The sterol-C5-desaturase ERG3 then catalyzes the introduction of a C-5 double bond in the B ring to produce 5-dehydroepisterol. The C-22 sterol desaturase ERG5 further converts 5-dehydroepisterol into ergosta-5,7,22,24(28)-tetraen-3beta-ol by forming the C-22(23) double bond in the sterol side chain. Finally, ergosta-5,7,22,24(28)-tetraen-3beta-ol is substrate of the C-24(28) sterol reductase ERG4 to produce ergosterol. The polypeptide is Sterol 24-C-methyltransferase ERG6 (Saccharomyces cerevisiae (strain ATCC 204508 / S288c) (Baker's yeast)).